The chain runs to 168 residues: GTP-dependent dephospho-CoA kinase (168 aa).

Positions 40, 41, 42, 59, and 112 each coordinate GTP.

The protein belongs to the GTP-dependent DPCK family.

It catalyses the reaction 3'-dephospho-CoA + GTP = GDP + CoA + H(+). It functions in the pathway cofactor biosynthesis; coenzyme A biosynthesis. In terms of biological role, catalyzes the GTP-dependent phosphorylation of the 3'-hydroxyl group of dephosphocoenzyme A to form coenzyme A (CoA). The polypeptide is GTP-dependent dephospho-CoA kinase (Methanoregula boonei (strain DSM 21154 / JCM 14090 / 6A8)).